We begin with the raw amino-acid sequence, 308 residues long: Oxygen-dependent coproporphyrinogen-III oxidase (308 aa).

Serine 100 serves as a coordination point for substrate. Positions 104 and 114 each coordinate a divalent metal cation. Histidine 114 functions as the Proton donor in the catalytic mechanism. Residue asparagine 116–arginine 118 coordinates substrate. The a divalent metal cation site is built by histidine 153 and histidine 183. The tract at residues tyrosine 248 to lysine 283 is important for dimerization. Residue glycine 266 to arginine 268 coordinates substrate.

This sequence belongs to the aerobic coproporphyrinogen-III oxidase family. In terms of assembly, homodimer. A divalent metal cation serves as cofactor.

The protein localises to the cytoplasm. It carries out the reaction coproporphyrinogen III + O2 + 2 H(+) = protoporphyrinogen IX + 2 CO2 + 2 H2O. The protein operates within porphyrin-containing compound metabolism; protoporphyrin-IX biosynthesis; protoporphyrinogen-IX from coproporphyrinogen-III (O2 route): step 1/1. Its function is as follows. Involved in the heme biosynthesis. Catalyzes the aerobic oxidative decarboxylation of propionate groups of rings A and B of coproporphyrinogen-III to yield the vinyl groups in protoporphyrinogen-IX. The protein is Oxygen-dependent coproporphyrinogen-III oxidase of Francisella tularensis subsp. holarctica (strain OSU18).